The primary structure comprises 737 residues: Catalase-peroxidase (737 aa).

The segment at residues 89–219 (WHSAGTYRVF…LAASHMGLIY (131 aa)) is a cross-link (tryptophyl-tyrosyl-methioninium (Trp-Tyr) (with M-245)). His-90 (proton acceptor) is an active-site residue. The tryptophyl-tyrosyl-methioninium (Tyr-Met) (with W-89) cross-link spans 219-245 (YVNPEGPNGNPDPKAAARDIRVTFGRM). Position 260 (His-260) interacts with heme b.

Belongs to the peroxidase family. Peroxidase/catalase subfamily. In terms of assembly, homodimer or homotetramer. Heme b is required as a cofactor. Post-translationally, formation of the three residue Trp-Tyr-Met cross-link is important for the catalase, but not the peroxidase activity of the enzyme.

Its subcellular location is the cytoplasm. It catalyses the reaction H2O2 + AH2 = A + 2 H2O. It carries out the reaction 2 H2O2 = O2 + 2 H2O. Functionally, bifunctional enzyme with both catalase and broad-spectrum peroxidase activity. This is Catalase-peroxidase from Aspergillus terreus (strain NIH 2624 / FGSC A1156).